Here is a 405-residue protein sequence, read N- to C-terminus: Mevalonate 3,5-bisphosphate decarboxylase (405 aa).

This sequence belongs to the mevalonate 3,5-bisphosphate decarboxylase family. Homodimer.

It carries out the reaction (R)-3,5-bisphosphomevalonate + H(+) = isopentenyl phosphate + phosphate + CO2. It functions in the pathway isoprenoid biosynthesis; isopentenyl diphosphate biosynthesis via mevalonate pathway. Catalyzes the ATP-independent decarboxylation of (R)-mevalonate 3,5-bisphosphate to isopentenyl phosphate. Functions in an alternative mevalonate pathway, only present in extreme acidophiles of the Thermoplasmatales order, which passes through mevalonate 3-phosphate rather than mevalonate 5-phosphate. The chain is Mevalonate 3,5-bisphosphate decarboxylase from Thermoplasma acidophilum (strain ATCC 25905 / DSM 1728 / JCM 9062 / NBRC 15155 / AMRC-C165).